The primary structure comprises 38 residues: Large ribosomal subunit protein bL36 (38 aa).

It belongs to the bacterial ribosomal protein bL36 family.

This Psychrobacter cryohalolentis (strain ATCC BAA-1226 / DSM 17306 / VKM B-2378 / K5) protein is Large ribosomal subunit protein bL36.